The primary structure comprises 180 residues: Cuticle protein 3 (180 aa).

Positions 1-16 are cleaved as a signal peptide; that stretch reads MMKLIVLAAFIGVCAG. Residues 58–121 enclose the Chitin-binding type R&amp;R domain; sequence EQGFRYAYET…PQGAHFPTPP (64 aa).

This is Cuticle protein 3 from Lonomia obliqua (Moth).